A 495-amino-acid chain; its full sequence is Thioredoxin reductase SEP1 (495 aa).

37–54 serves as a coordination point for FAD; it reads DFVKPSPPGTTWGLGGTC. A disulfide bond links Cys54 and Cys59. The active-site Proton acceptor is the His468. A cross-link (cysteinyl-selenocysteine (Cys-Sec)) is located at residues 493 to 494; that stretch reads CU. Sec494 is a non-standard amino acid (selenocysteine).

The protein belongs to the class-I pyridine nucleotide-disulfide oxidoreductase family. In terms of assembly, homodimer. FAD is required as a cofactor. In terms of processing, the N-terminus is blocked.

The enzyme catalyses [thioredoxin]-dithiol + NADP(+) = [thioredoxin]-disulfide + NADPH + H(+). Its activity is regulated as follows. Activity was very low in selenium-depleted cells, but increased 4-fold to the same level as in selenium-sufficient cells for 70 hours after the addition of 10 nm selenite. In Emiliania huxleyi (Coccolithophore), this protein is Thioredoxin reductase SEP1 (SEP1).